The primary structure comprises 1070 residues: MLGDGNEGISTIPGFNQIQFEGFCRFIDQGLTEELYKFPKIEDTDQEIEFQLFVETYQLVEPLIKERDAVYESLTYSSELYVSAGLIWKNSRDMQEQTIFIGNIPLMNSLGTSIVNGIYRIVINQILQSPGIYYRSELDHNGISVYTGTIISDWGGRSELEIDRKARIWARVSRKQKISILVLSSAMGLNLREILENVCYPEIFLSFLSDKERKKIGSKENAILEFYQQFACVGGDPVFSESLCKELQKKFFQQRCELGRIGRRNMNRRLNLDIPQNNTFLLPRDILAAADHLIGLKFGMGALDDMNHLKNKRIRSVADLLQDQFGLALVRLENVVRGTICGAIRHKLIPTPQNLVTSTPLTTTYESFFGLHPLSQVLDRTNPLTQIVHGRKLSYLGPGGLTGRTASFRIRDIHPSHYGRICPIDTSEGINVGLIGSLAIHARIGHWGSLESPFYEISERSTGVRMLYLSPGRDEYYMVAAGNSLALNQDIQEEQVVPARYRQEFLTIAWEQVHLRSIFPFQYFSIGASLIPFIEHNDANRALMSSNMQRQAVPLSRSEKCIVGTGLERQAALDSGALAIAEREGRVVYTNTDKILLAGNGDILSIPLVIYQRSNKNTCMHQKLQVPRGKCIKKGQILADGAATVGGELALGKNVLVAYMPWEGYNSEDAVLISERLVYEDIYTSFHIRKYEIQTHVTSQGPEKVTNEIPHLEAHLLRNLDKNGIVMLGSWVETGDILVGKLTPQVVKESSYAPEDRLLRAILGIQVSTSKETCLKLPIGGRGRVIDVRWIQKRGGSSYNPETIRVYILQKREIKVGDKVAGRHGNKGIISKILPRQDMPYLQDGRSVDMVFNPLGVPSRMNVGQIFECSLGLAGSLLDRHYRIAPFDERYEQEASRKLVFSELYEASKQTANPWVFEPEYPGKSRIFDGRTGNPFEQPVIIGKPYILKLIHQVDDKIHGRSSGHYALVTQQPLRGRAKQGGQRVGEMEVWALEGFGVAHILQEMLTYKSDHIRARQEVLGTTIIGGTIPNPEDAPESFRLLVRELRSLALELNHFLVSEKNFQINRKEA.

It belongs to the RNA polymerase beta chain family. In plastids the minimal PEP RNA polymerase catalytic core is composed of four subunits: alpha, beta, beta', and beta''. When a (nuclear-encoded) sigma factor is associated with the core the holoenzyme is formed, which can initiate transcription.

The protein resides in the plastid. Its subcellular location is the chloroplast. The catalysed reaction is RNA(n) + a ribonucleoside 5'-triphosphate = RNA(n+1) + diphosphate. Its function is as follows. DNA-dependent RNA polymerase catalyzes the transcription of DNA into RNA using the four ribonucleoside triphosphates as substrates. This is DNA-directed RNA polymerase subunit beta from Nicotiana sylvestris (Wood tobacco).